Reading from the N-terminus, the 123-residue chain is Sirohydrochlorin cobaltochelatase (123 aa).

Residue His9 is the Proton acceptor of the active site. His9 lines the Co(2+) pocket. Substrate contacts are provided by residues Glu43 and 68-73 (FAAGMH). Residue His73 participates in Co(2+) binding.

This sequence belongs to the CbiX family. CbiXS subfamily. Homotetramer; dimer of dimers.

The catalysed reaction is Co-sirohydrochlorin + 2 H(+) = sirohydrochlorin + Co(2+). The protein operates within cofactor biosynthesis; adenosylcobalamin biosynthesis; cob(II)yrinate a,c-diamide from sirohydrochlorin (anaerobic route): step 1/10. Its function is as follows. Catalyzes the insertion of Co(2+) into sirohydrochlorin as part of the anaerobic pathway to cobalamin biosynthesis. The chain is Sirohydrochlorin cobaltochelatase from Sulfolobus acidocaldarius (strain ATCC 33909 / DSM 639 / JCM 8929 / NBRC 15157 / NCIMB 11770).